Here is an 842-residue protein sequence, read N- to C-terminus: MDEVLEMIADAVSSLVVAITDSEEKNTLFGDMVPGVELIQQAVNGMAEAAEETVSLIDEEFIGQLESTSKQLKNSAGQLYVHAVRAREDPWNRVPQKDAIKAAKQILQNVVLLVLIEEQSNIKVLVNIAKKAAEGVRRIDEIENIKQLDVMIGDVNQLQNELVKRSQRRSEGSHNPELRSKLEDIATMVNILSEQHQASARDVCRNPREETLRSKRSELSSKLLSAIDDLIYTIKLIFENNTKFVDLAFKWKPVRTMAEDEVTRASAVLIDNLRTLPKSIEAGNGPAAAREIVNAANLQISNAIIVANRCQDPVKKKMLLKQIEELKKLTPMLISAMKPVLENPNDQEAQKHLESVIYSTQKASEALATAVVSSPAEIVAASGVSLARDLDSLEEAIASGDKKRAQVILSHIPSAIDKHIELANALLETITDPGQRHQIKQSIERLQTLKPRIIENANRAIANPNDHEARKNLSSDIKEAKKAIGQISQPYEVVSALNTKIHNDLDSLIKCIDEGGPDMQVKGVQYAKDIANSIKKQIEAAEAYAQTITDPDRKKQVLDSIEQLKKLTPQLLEAIRACLANPDDKEARKRLDDVVRRVKEASSNLSQVIQPTADELKEEKRKRNEEIARIEAEEKAKARALLKAAELARIEAEEEKKRLAIIEEEKKRLAAEEEERKRAPKLVVPEGPVNKAVFGAAADVAQALESKVRDGTPLGILVQLSDEIAQQMALIASFAMNGDVKGMITAARKIADTIKQVQTQAKHIADNCTDPRLKQNVLTYCDCGGNFSTQLKILCAVKSNDFNDPTAEEQLVTCAKGLSGAVINLVKSSEAASIKQRKVPQQ.

Residues 585–679 (KEARKRLDDV…AAEEEERKRA (95 aa)) are a coiled coil.

The protein belongs to the vinculin/alpha-catenin family. In terms of assembly, monomer. Associates with F-actin. Interacts with aarA, ctxA, ctxB and rgaA. Epithelium.

The protein resides in the cytoplasm. It localises to the cell cortex. The protein localises to the cell junction. In terms of biological role, involved in cell adhesion. Thought to play an important role in cytokinesis B, probably by providing substrate adhesion and traction forces. Required to organize and polarize the tip epithelium during cytokinesis. Required for the normal distribution of myosin in the tip epithelium. Involved in the localization of ctxA, ctxB, dcsA, exoc6 and rgaA. Thought to form a complex with ctxA, ctxB, and rgaA which regulates myosin accumulation to the apical plasma membrane. The sequence is that of Probable vinculin (ctnnA) from Dictyostelium discoideum (Social amoeba).